We begin with the raw amino-acid sequence, 1124 residues long: PAN2-PAN3 deadenylation complex catalytic subunit PAN2 (1124 aa).

4 WD repeats span residues isoleucine 19–proline 58, proline 118–phenylalanine 157, asparagine 158–serine 195, and serine 309–phenylalanine 348. The interval phenylalanine 351–valine 484 is linker. The USP domain occupies valine 484–alanine 861. Residues isoleucine 917–tyrosine 1091 enclose the Exonuclease domain. Residues aspartate 920, glutamate 922, aspartate 1030, and aspartate 1083 each contribute to the a divalent metal cation site.

This sequence belongs to the peptidase C19 family. PAN2 subfamily. Forms a heterotrimer with an asymmetric homodimer of the regulatory subunit PAN3 to form the poly(A)-nuclease (PAN) deadenylation complex. The cofactor is a divalent metal cation.

The protein resides in the cytoplasm. It carries out the reaction Exonucleolytic cleavage of poly(A) to 5'-AMP.. Its activity is regulated as follows. Positively regulated by the regulatory subunit PAN3. Its function is as follows. Catalytic subunit of the poly(A)-nuclease (PAN) deadenylation complex, one of two cytoplasmic mRNA deadenylases involved in mRNA turnover. PAN specifically shortens poly(A) tails of RNA and the activity is stimulated by poly(A)-binding protein PAB1. PAN deadenylation is followed by rapid degradation of the shortened mRNA tails by the CCR4-NOT complex. Deadenylated mRNAs are then degraded by two alternative mechanisms, namely exosome-mediated 3'-5' exonucleolytic degradation, or deadenylation-dependent mRNA decaping and subsequent 5'-3' exonucleolytic degradation by XRN1. May also be involved in post-transcriptional maturation of mRNA poly(A) tails. This chain is PAN2-PAN3 deadenylation complex catalytic subunit PAN2, found in Debaryomyces hansenii (strain ATCC 36239 / CBS 767 / BCRC 21394 / JCM 1990 / NBRC 0083 / IGC 2968) (Yeast).